Here is a 237-residue protein sequence, read N- to C-terminus: Undecaprenyl-diphosphatase (237 aa).

The next 7 membrane-spanning stretches (helical) occupy residues Gln38–Ile58, Trp65–Phe85, Leu92–Phe112, Met126–Ile146, Ala166–Leu186, Val191–Ser211, and Gly217–Gly237.

It belongs to the UppP family.

It localises to the cell inner membrane. The enzyme catalyses di-trans,octa-cis-undecaprenyl diphosphate + H2O = di-trans,octa-cis-undecaprenyl phosphate + phosphate + H(+). Catalyzes the dephosphorylation of undecaprenyl diphosphate (UPP). Confers resistance to bacitracin. This chain is Undecaprenyl-diphosphatase, found in Thermotoga maritima (strain ATCC 43589 / DSM 3109 / JCM 10099 / NBRC 100826 / MSB8).